A 105-amino-acid polypeptide reads, in one-letter code: uncharacterized protein (105 aa).

The helical transmembrane segment at 41–62 (GIITKIAASPFVIVLYFNTAFF) threads the bilayer.

It is found in the membrane. This is an uncharacterized protein from Saccharomyces cerevisiae (strain ATCC 204508 / S288c) (Baker's yeast).